A 1285-amino-acid polypeptide reads, in one-letter code: Period circadian protein homolog 1 (1285 aa).

The segment at 1 to 134 (MSGPLEGADG…SSEQSARART (134 aa)) is disordered. The tract at residues 1–151 (MSGPLEGADG…LRELKLRLPP (151 aa)) is interaction with BTRC. Composition is skewed to low complexity over residues 48-57 (NSNGSSGNES) and 64-115 (GASQ…ASSE). Positions 116 to 132 (QDNPSTSGCSSEQSARA) are enriched in polar residues. At threonine 121 the chain carries Phosphothreonine; by CSNK1E. 2 positions are modified to phosphoserine; by CSNK1E: serine 122 and serine 126. The short motif at 138 to 147 (LMTALRELKL) is the Nuclear export signal 1 element. PAS domains lie at 208–275 (ITSE…PFRL) and 348–414 (YEAP…KILQ). The PAC domain maps to 422-465 (HSPIRFCARNGEYVTMDTSWAGFVHPWSRKVAFVLGRHKVRTAP). Positions 489 to 498 (LSEQIHRLLL) match the Nuclear export signal 2 motif. Disordered regions lie at residues 503-544 (SSSP…PAPV) and 643-694 (TKRK…KEPV). Low complexity-rich tracts occupy residues 523–533 (SPGSSSDSNGG) and 648–658 (ASSSSCTASSA). The required for phosphorylation by CSNK1E stretch occupies residues 592 to 811 (ELEVVPMPNQ…GLDSSSATPS (220 aa)). 4 positions are modified to phosphoserine: serine 657, serine 659, serine 700, and serine 811. Disordered regions lie at residues 802-867 (GLDS…PPST) and 931-1030 (LSQA…DALS). The Nuclear localization signal motif lies at 820–836 (VPPGRRHHCRSKAKRSR). Positions 823-840 (GRRHHCRSKAKRSRHHHT) are enriched in basic residues. Pro residues predominate over residues 853-867 (SPVPPSGPWPPPPST). Over residues 943–954 (ASHSPSPSLTPL) the composition is skewed to low complexity. Polar residues predominate over residues 967–979 (FNSRCSSPLQLNL). Phosphoserine occurs at positions 972 and 973. A Nuclear export signal 3 motif is present at residues 975 to 982 (LQLNLLQL). The short motif at 1036–1040 (LELLL) is the LXXLL element. The span at 1045-1055 (RSGTGSAASGS) shows a compositional bias: low complexity. 2 disordered regions span residues 1045–1091 (RSGT…SKYF) and 1202–1285 (IQDP…NSTS). A compositionally biased stretch (gly residues) spans 1056-1070 (LGSGLGSGSGSGSHE). The segment covering 1071-1088 (GGSTSASITRSSQSSHTS) has biased composition (low complexity). The interval 1142–1285 (SRDRASVLKQ…ALPAEENSTS (144 aa)) is CRY binding domain. The span at 1229–1241 (GEGGGGGGGGGEG) shows a compositional bias: gly residues. Residues 1269–1285 (GGSSSSPALPAEENSTS) show a composition bias toward polar residues.

In terms of assembly, homodimer. Component of the circadian core oscillator, which includes the CRY proteins, CLOCK or NPAS2, BMAL1 or BMAL2, CSNK1D and/or CSNK1E, TIMELESS, and the PER proteins. Interacts directly with TIMELESS, PER2, PER3, CRY1 and CRY2. Interacts with BMAL1 and CLOCK. Interacts with GPRASP1. Interacts (phosphorylated) with BTRC and FBXW11; the interactions trigger proteasomal degradation. Interacts with NONO, WDR5 and SFPQ. Interacts with USP2. Interacts with HNF4A. In terms of processing, phosphorylated on serine residues by CSNK1D, CSNK1E and probably also by CSNK1G2. Phosphorylation by CSNK1D or CSNK1E promotes nuclear location of PER proteins as well as ubiquitination and subsequent degradation. May be dephosphorylated by PP1. Post-translationally, ubiquitinated; requires phosphorylation by CSNK1E and interaction with BTRC and FBXW11. Deubiquitinated by USP2. Expressed in the brain, mainly in the suprachiasmatic nucleus (SCN). Expression also found in the harderian gland, lung, eye, intestine, liver and skeletal muscle.

It is found in the nucleus. The protein resides in the cytoplasm. Functionally, transcriptional repressor which forms a core component of the circadian clock. The circadian clock, an internal time-keeping system, regulates various physiological processes through the generation of approximately 24 hour circadian rhythms in gene expression, which are translated into rhythms in metabolism and behavior. It is derived from the Latin roots 'circa' (about) and 'diem' (day) and acts as an important regulator of a wide array of physiological functions including metabolism, sleep, body temperature, blood pressure, endocrine, immune, cardiovascular, and renal function. Consists of two major components: the central clock, residing in the suprachiasmatic nucleus (SCN) of the brain, and the peripheral clocks that are present in nearly every tissue and organ system. Both the central and peripheral clocks can be reset by environmental cues, also known as Zeitgebers (German for 'timegivers'). The predominant Zeitgeber for the central clock is light, which is sensed by retina and signals directly to the SCN. The central clock entrains the peripheral clocks through neuronal and hormonal signals, body temperature and feeding-related cues, aligning all clocks with the external light/dark cycle. Circadian rhythms allow an organism to achieve temporal homeostasis with its environment at the molecular level by regulating gene expression to create a peak of protein expression once every 24 hours to control when a particular physiological process is most active with respect to the solar day. Transcription and translation of core clock components (CLOCK, NPAS2, BMAL1, BMAL2, PER1, PER2, PER3, CRY1 and CRY2) plays a critical role in rhythm generation, whereas delays imposed by post-translational modifications (PTMs) are important for determining the period (tau) of the rhythms (tau refers to the period of a rhythm and is the length, in time, of one complete cycle). A diurnal rhythm is synchronized with the day/night cycle, while the ultradian and infradian rhythms have a period shorter and longer than 24 hours, respectively. Disruptions in the circadian rhythms contribute to the pathology of cardiovascular diseases, cancer, metabolic syndromes and aging. A transcription/translation feedback loop (TTFL) forms the core of the molecular circadian clock mechanism. Transcription factors, CLOCK or NPAS2 and BMAL1 or BMAL2, form the positive limb of the feedback loop, act in the form of a heterodimer and activate the transcription of core clock genes and clock-controlled genes (involved in key metabolic processes), harboring E-box elements (5'-CACGTG-3') within their promoters. The core clock genes: PER1/2/3 and CRY1/2 which are transcriptional repressors form the negative limb of the feedback loop and interact with the CLOCK|NPAS2-BMAL1|BMAL2 heterodimer inhibiting its activity and thereby negatively regulating their own expression. This heterodimer also activates nuclear receptors NR1D1/2 and RORA/B/G, which form a second feedback loop and which activate and repress BMAL1 transcription, respectively. Regulates circadian target genes expression at post-transcriptional levels, but may not be required for the repression at transcriptional level. Controls PER2 protein decay. Represses CRY2 preventing its repression on CLOCK/BMAL1 target genes such as FXYD5 and SCNN1A in kidney and PPARA in liver. Besides its involvement in the maintenance of the circadian clock, has an important function in the regulation of several processes. Participates in the repression of glucocorticoid receptor NR3C1/GR-induced transcriptional activity by reducing the association of NR3C1/GR to glucocorticoid response elements (GREs) by BMAL1:CLOCK. Plays a role in the modulation of the neuroinflammatory state via the regulation of inflammatory mediators release, such as CCL2 and IL6. In spinal astrocytes, negatively regulates the MAPK14/p38 and MAPK8/JNK MAPK cascades as well as the subsequent activation of NFkappaB. Coordinately regulates the expression of multiple genes that are involved in the regulation of renal sodium reabsorption. Can act as gene expression activator in a gene and tissue specific manner, in kidney enhances WNK1 and SLC12A3 expression in collaboration with CLOCK. Modulates hair follicle cycling. Represses the CLOCK-BMAL1 induced transcription of BHLHE40/DEC1. The chain is Period circadian protein homolog 1 (PER1) from Spalax judaei (Judean Mountains blind mole rat).